The primary structure comprises 252 residues: Large ribosomal subunit protein uL29m (252 aa).

The residue at position 146 (lysine 146) is an N6-acetyllysine. Over residues 230 to 240 (KKKEKILHAKF) the composition is skewed to basic residues. Positions 230–252 (KKKEKILHAKFPHLSQERKSSSV) are disordered.

It belongs to the universal ribosomal protein uL29 family. Component of the mitochondrial ribosome large subunit (39S) which comprises a 16S rRNA and about 50 distinct proteins.

It localises to the mitochondrion. This Mus musculus (Mouse) protein is Large ribosomal subunit protein uL29m (Mrpl47).